We begin with the raw amino-acid sequence, 549 residues long: Glucose-6-phosphate isomerase (549 aa).

N6-acetyllysine occurs at positions 80, 228, and 234. Glu-355 (proton donor) is an active-site residue. Active-site residues include His-386 and Lys-514.

This sequence belongs to the GPI family.

Its subcellular location is the cytoplasm. It catalyses the reaction alpha-D-glucose 6-phosphate = beta-D-fructose 6-phosphate. It functions in the pathway carbohydrate biosynthesis; gluconeogenesis. Its pathway is carbohydrate degradation; glycolysis; D-glyceraldehyde 3-phosphate and glycerone phosphate from D-glucose: step 2/4. Its function is as follows. Catalyzes the reversible isomerization of glucose-6-phosphate to fructose-6-phosphate. The protein is Glucose-6-phosphate isomerase of Shigella flexneri.